A 366-amino-acid polypeptide reads, in one-letter code: Mannonate dehydratase (366 aa).

The protein belongs to the mannonate dehydratase family. Fe(2+) is required as a cofactor. Requires Mn(2+) as cofactor.

The catalysed reaction is D-mannonate = 2-dehydro-3-deoxy-D-gluconate + H2O. It participates in carbohydrate metabolism; pentose and glucuronate interconversion. Catalyzes the dehydration of D-mannonate. This chain is Mannonate dehydratase, found in Streptococcus pneumoniae (strain 70585).